The chain runs to 126 residues: Small ribosomal subunit protein uS13 (126 aa).

The segment at 99-126 is disordered; sequence LRGQSTKNNARTRKGKRKTVANKKRVTK. Over residues 108–126 the composition is skewed to basic residues; it reads ARTRKGKRKTVANKKRVTK.

The protein belongs to the universal ribosomal protein uS13 family. Part of the 30S ribosomal subunit. Forms a loose heterodimer with protein S19. Forms two bridges to the 50S subunit in the 70S ribosome.

In terms of biological role, located at the top of the head of the 30S subunit, it contacts several helices of the 16S rRNA. In the 70S ribosome it contacts the 23S rRNA (bridge B1a) and protein L5 of the 50S subunit (bridge B1b), connecting the 2 subunits; these bridges are implicated in subunit movement. Contacts the tRNAs in the A and P-sites. The polypeptide is Small ribosomal subunit protein uS13 (Azobacteroides pseudotrichonymphae genomovar. CFP2).